Consider the following 175-residue polypeptide: uncharacterized protein (175 aa).

This is an uncharacterized protein from Enterobacteria phage T4 (Bacteriophage T4).